A 151-amino-acid chain; its full sequence is Viral interleukin-17 (151 aa).

The first 22 residues, 1-22 (MTFRKTSLVLLLLLSIDCIVKS), serve as a signal peptide directing secretion. 3 N-linked (GlcNAc...) asparagine; by host glycosylation sites follow: N36, N53, and N64. 2 disulfide bridges follow: C90/C140 and C95/C142.

This sequence belongs to the IL-17 family.

Its subcellular location is the secreted. The chain is Viral interleukin-17 (13) from Saimiri sciureus (Common squirrel monkey).